Reading from the N-terminus, the 340-residue chain is Probable serine acetyltransferase 5 (340 aa).

Low complexity-rich tracts occupy residues 1-17 (MLVV…RVAA) and 54-64 (PAEVVPAFAPP). The interval 1 to 67 (MLVVVARKSS…VPAFAPPESE (67 aa)) is disordered.

It belongs to the transferase hexapeptide repeat family. In terms of assembly, homomultimer.

It catalyses the reaction L-serine + acetyl-CoA = O-acetyl-L-serine + CoA. Its pathway is amino-acid biosynthesis; L-cysteine biosynthesis; L-cysteine from L-serine: step 1/2. The polypeptide is Probable serine acetyltransferase 5 (SAT5) (Oryza sativa subsp. japonica (Rice)).